The chain runs to 1062 residues: Translation initiation factor IF-2 (1062 aa).

Positions 34–463 (SASSTVEAPV…RMGAMVPRGN (430 aa)) are disordered. A compositionally biased stretch (pro residues) spans 76–121 (PTPPSRPGLAPRPGPRPVPGRPGPLGRPGPATPAPSPSPASPPLPA). The segment covering 122–153 (SPVQASPVQASPVQASPTSAPAAPRPAAASAV) has biased composition (low complexity). Pro residues predominate over residues 154–178 (PAPPMPSVPSAPSGPRPGPNAPRPG). A compositionally biased stretch (gly residues) spans 198–214 (TAGGPTAGGPTAGGPTA). Pro residues predominate over residues 294–305 (RPTPGGMPPRPG). 2 stretches are compositionally biased toward gly residues: residues 307–324 (PRSG…GTGG) and 344–430 (PGGG…GGRG). The span at 431–442 (RPGRQRKSKRAK) shows a compositional bias: basic residues. Positions 555 to 727 (SRPPVVTVMG…IVLTADASLD (173 aa)) constitute a tr-type G domain. Positions 564-571 (GHVDHGKT) are G1. Residue 564–571 (GHVDHGKT) coordinates GTP. The segment at 589 to 593 (GITQH) is G2. Residues 614 to 617 (DTPG) are G3. Residues 614 to 618 (DTPGH) and 668 to 671 (NKVD) contribute to the GTP site. Residues 668–671 (NKVD) form a G4 region. Positions 704–706 (SAR) are G5.

It belongs to the TRAFAC class translation factor GTPase superfamily. Classic translation factor GTPase family. IF-2 subfamily.

The protein localises to the cytoplasm. In terms of biological role, one of the essential components for the initiation of protein synthesis. Protects formylmethionyl-tRNA from spontaneous hydrolysis and promotes its binding to the 30S ribosomal subunits. Also involved in the hydrolysis of GTP during the formation of the 70S ribosomal complex. This Frankia casuarinae (strain DSM 45818 / CECT 9043 / HFP020203 / CcI3) protein is Translation initiation factor IF-2.